The chain runs to 3841 residues: Transformation/transcription domain-associated protein (3841 aa).

Disordered regions lie at residues 491–516 and 2002–2027; these read TPTVTTPALPPPAPPTPVTPAPPPAT and QQPESEADPGSVGEGTSGASAAMKRG. Residues 498–515 show a composition bias toward pro residues; it reads ALPPPAPPTPVTPAPPPA. A Bipartite nuclear localization signal motif is present at residues 2025–2040; the sequence is KRGMSVDSAQDVKRFR. In terms of domain architecture, FAT spans 2671-3239; sequence VLKYLGKTHN…YFPIRTLYLT (569 aa). A disordered region spans residues 3249 to 3271; sequence KSDSGQQQPSSAAAQTHSASDPG. Low complexity predominate over residues 3251-3268; sequence DSGQQQPSSAAAQTHSAS. The PI3K/PI4K catalytic domain occupies 3482-3805; the sequence is MPRVEIVQKH…AVTAIMTRLH (324 aa). Positions 3488–3494 are G-loop; the sequence is VQKHNTA. Residues 3669–3677 form a catalytic loop region; sequence HLNRLNPEM. The tract at residues 3689–3714 is activation loop; sequence VSYFRFDINDATGDLDANRPVPFRLT. The region spanning 3809–3841 is the FATC domain; sequence QFEGGESKVNTLVAAANSLDNLCRMDPAWHPWL.

This sequence belongs to the PI3/PI4-kinase family. TRA1 subfamily.

The protein resides in the nucleus. Adapter protein, which is found in various multiprotein chromatin complexes with histone acetyltransferase activity (HAT), which gives a specific tag for epigenetic transcription activation. May be required for the mitotic checkpoint and normal cell cycle progression. May play a role in the formation and maintenance of the auditory system. The protein is Transformation/transcription domain-associated protein of Danio rerio (Zebrafish).